Consider the following 716-residue polypeptide: Zinc finger protein on ecdysone puffs (716 aa).

Disordered regions lie at residues proline 103 to arginine 168 and lysine 182 to tyrosine 208. Residues lysine 188–threonine 203 are compositionally biased toward basic and acidic residues. Serine 201 carries the phosphoserine modification. A Phosphothreonine modification is found at threonine 203. Serine 206 carries the post-translational modification Phosphoserine. The segment at phenylalanine 216–histidine 240 adopts a C2H2-type 1 zinc-finger fold. The C2H2-type 2; atypical zinc-finger motif lies at aspartate 288–histidine 310. Residues proline 319–histidine 343 form a C2H2-type 3 zinc finger. The segment covering asparagine 350–arginine 359 has biased composition (basic and acidic residues). Residues asparagine 350–aspartate 447 are disordered. The Nuclear localization signal signature appears at lysine 379–lysine 383. Residues lysine 386–alanine 401 show a composition bias toward basic and acidic residues. Residues glutamate 405–glycine 414 show a composition bias toward acidic residues. Residues glutamate 415–aspartate 431 are compositionally biased toward basic and acidic residues. Over residues glutamate 432–aspartate 447 the composition is skewed to acidic residues. The segment at tyrosine 489–histidine 513 adopts a C2H2-type 4 zinc-finger fold. A disordered region spans residues arginine 534–tyrosine 716. The segment covering glutamate 541–glutamate 551 has biased composition (basic and acidic residues). The Nuclear localization signal motif lies at arginine 544–lysine 548. Acidic residues predominate over residues alanine 560–proline 638. Residues glutamate 639–lysine 656 show a composition bias toward pro residues. The span at threonine 657 to proline 704 shows a compositional bias: low complexity. Phosphoserine occurs at positions 673, 684, and 686. Residue threonine 692 is modified to Phosphothreonine. Residues glutamine 707–tyrosine 716 are compositionally biased toward basic residues.

Its subcellular location is the nucleus. The protein resides in the chromosome. Its function is as follows. May play a role in the process of early and late gene activation, or possibly in RNA processing, for a defined set of developmentally regulated loci. This is Zinc finger protein on ecdysone puffs (Pep) from Drosophila melanogaster (Fruit fly).